Consider the following 277-residue polypeptide: Bifunctional protein FolD (277 aa).

Residues 164–166 (GRS), Ser-189, and Thr-230 each bind NADP(+).

It belongs to the tetrahydrofolate dehydrogenase/cyclohydrolase family. In terms of assembly, homodimer.

It catalyses the reaction (6R)-5,10-methylene-5,6,7,8-tetrahydrofolate + NADP(+) = (6R)-5,10-methenyltetrahydrofolate + NADPH. The catalysed reaction is (6R)-5,10-methenyltetrahydrofolate + H2O = (6R)-10-formyltetrahydrofolate + H(+). Its pathway is one-carbon metabolism; tetrahydrofolate interconversion. Functionally, catalyzes the oxidation of 5,10-methylenetetrahydrofolate to 5,10-methenyltetrahydrofolate and then the hydrolysis of 5,10-methenyltetrahydrofolate to 10-formyltetrahydrofolate. The polypeptide is Bifunctional protein FolD (Clostridium perfringens (strain SM101 / Type A)).